The chain runs to 337 residues: Porphobilinogen deaminase (337 aa).

C254 carries the post-translational modification S-(dipyrrolylmethanemethyl)cysteine.

It belongs to the HMBS family. Dipyrromethane is required as a cofactor.

It carries out the reaction 4 porphobilinogen + H2O = hydroxymethylbilane + 4 NH4(+). It participates in porphyrin-containing compound metabolism; protoporphyrin-IX biosynthesis; coproporphyrinogen-III from 5-aminolevulinate: step 2/4. Tetrapolymerization of the monopyrrole PBG into the hydroxymethylbilane pre-uroporphyrinogen in several discrete steps. This chain is Porphobilinogen deaminase (pda-1), found in Neurospora crassa (strain ATCC 24698 / 74-OR23-1A / CBS 708.71 / DSM 1257 / FGSC 987).